The primary structure comprises 353 residues: MSEPLKPRIDFEQPLQSLDEPVLKSAQAFDEQAAEKFYPAAQELDAEDEEGRVEGLVNAALKPKRSLWRKMVTAGMVILGASVIAQSVQWVNQAWQQQDWIALGATTAGGLIILAGVGSVVTEWRRLYHLRQRAEERDIARALLVSHGVGQGRVFCEKLARQAGLDQGHPALQRWQASLHETHNDREVVELYAKLVQPALDNQARAEISRYAAESALMIAVSPLALVDMAFIAWRNIRLINRIAALYGIELGYFSRIRLFRLVLLNIAFAGASELVREVGMDWLSQDLAARLSARAAQGIGAGLLTARLGIKAMELCRPLPWLEGDKPKLGDFRRQLMNQLKNTLPKKDKTAH.

3 helical membrane passes run 71–91 (MVTAGMVILGASVIAQSVQWV), 101–121 (IALGATTAGGLIILAGVGSVV), and 214–234 (ESALMIAVSPLALVDMAFIAW).

This sequence belongs to the UPF0283 family.

The protein resides in the cell inner membrane. The sequence is that of UPF0283 membrane protein YpsIP31758_1791 from Yersinia pseudotuberculosis serotype O:1b (strain IP 31758).